The chain runs to 160 residues: Transcription elongation factor GreA (160 aa).

The stretch at 1–72 (MAEKTYPMTQ…QIQILETKIR (72 aa)) forms a coiled coil.

It belongs to the GreA/GreB family.

Functionally, necessary for efficient RNA polymerase transcription elongation past template-encoded arresting sites. The arresting sites in DNA have the property of trapping a certain fraction of elongating RNA polymerases that pass through, resulting in locked ternary complexes. Cleavage of the nascent transcript by cleavage factors such as GreA or GreB allows the resumption of elongation from the new 3'terminus. GreA releases sequences of 2 to 3 nucleotides. The chain is Transcription elongation factor GreA from Streptococcus agalactiae serotype Ia (strain ATCC 27591 / A909 / CDC SS700).